Reading from the N-terminus, the 343-residue chain is Anthranilate phosphoribosyltransferase (343 aa).

5-phospho-alpha-D-ribose 1-diphosphate contacts are provided by residues Gly78, Gly81–Asp82, Thr86, Asn88–Thr91, Lys106–Ser114, and Ser118. Gly78 serves as a coordination point for anthranilate. Position 90 (Ser90) interacts with Mg(2+). Asn109 is a binding site for anthranilate. Position 164 (Arg164) interacts with anthranilate. Residues Asp223 and Glu224 each coordinate Mg(2+).

Belongs to the anthranilate phosphoribosyltransferase family. As to quaternary structure, homodimer. Requires Mg(2+) as cofactor.

It carries out the reaction N-(5-phospho-beta-D-ribosyl)anthranilate + diphosphate = 5-phospho-alpha-D-ribose 1-diphosphate + anthranilate. The protein operates within amino-acid biosynthesis; L-tryptophan biosynthesis; L-tryptophan from chorismate: step 2/5. Functionally, catalyzes the transfer of the phosphoribosyl group of 5-phosphorylribose-1-pyrophosphate (PRPP) to anthranilate to yield N-(5'-phosphoribosyl)-anthranilate (PRA). This chain is Anthranilate phosphoribosyltransferase, found in Chlamydia caviae (strain ATCC VR-813 / DSM 19441 / 03DC25 / GPIC) (Chlamydophila caviae).